The chain runs to 202 residues: Glycerol-3-phosphate acyltransferase (202 aa).

Transmembrane regions (helical) follow at residues 2 to 22 (ANLL…AVVV), 85 to 105 (LAMV…HRFA), 119 to 139 (AINP…AFFF), and 158 to 178 (VLME…ILLI).

This sequence belongs to the PlsY family. As to quaternary structure, probably interacts with PlsX.

It localises to the cell inner membrane. It catalyses the reaction an acyl phosphate + sn-glycerol 3-phosphate = a 1-acyl-sn-glycero-3-phosphate + phosphate. The protein operates within lipid metabolism; phospholipid metabolism. In terms of biological role, catalyzes the transfer of an acyl group from acyl-phosphate (acyl-PO(4)) to glycerol-3-phosphate (G3P) to form lysophosphatidic acid (LPA). This enzyme utilizes acyl-phosphate as fatty acyl donor, but not acyl-CoA or acyl-ACP. This is Glycerol-3-phosphate acyltransferase from Cupriavidus pinatubonensis (strain JMP 134 / LMG 1197) (Cupriavidus necator (strain JMP 134)).